We begin with the raw amino-acid sequence, 196 residues long: uncharacterized protein (196 aa).

Residues 44–80 (RSVAVPGTEGKKAQNLRQLPAARLTYPTSSSTRPSHA) form a disordered region.

This is an uncharacterized protein from Treponema pallidum (strain Nichols).